Consider the following 202-residue polypeptide: dTTP/UTP pyrophosphatase (202 aa).

Catalysis depends on Asp80, which acts as the Proton acceptor.

Belongs to the Maf family. YhdE subfamily. Requires a divalent metal cation as cofactor.

Its subcellular location is the cytoplasm. The catalysed reaction is dTTP + H2O = dTMP + diphosphate + H(+). The enzyme catalyses UTP + H2O = UMP + diphosphate + H(+). Functionally, nucleoside triphosphate pyrophosphatase that hydrolyzes dTTP and UTP. May have a dual role in cell division arrest and in preventing the incorporation of modified nucleotides into cellular nucleic acids. The chain is dTTP/UTP pyrophosphatase from Alkalilimnicola ehrlichii (strain ATCC BAA-1101 / DSM 17681 / MLHE-1).